The following is a 578-amino-acid chain: Sulfite reductase [NADPH] hemoprotein beta-component (578 aa).

4 residues coordinate [4Fe-4S] cluster: Cys441, Cys447, Cys487, and Cys491. Cys491 provides a ligand contact to siroheme.

This sequence belongs to the nitrite and sulfite reductase 4Fe-4S domain family. As to quaternary structure, alpha(8)-beta(8). The alpha component is a flavoprotein, the beta component is a hemoprotein. The cofactor is siroheme. It depends on [4Fe-4S] cluster as a cofactor.

It carries out the reaction hydrogen sulfide + 3 NADP(+) + 3 H2O = sulfite + 3 NADPH + 4 H(+). Its pathway is sulfur metabolism; hydrogen sulfide biosynthesis; hydrogen sulfide from sulfite (NADPH route): step 1/1. Functionally, component of the sulfite reductase complex that catalyzes the 6-electron reduction of sulfite to sulfide. This is one of several activities required for the biosynthesis of L-cysteine from sulfate. This Vibrio vulnificus (strain CMCP6) protein is Sulfite reductase [NADPH] hemoprotein beta-component.